The sequence spans 341 residues: TERF1-interacting nuclear factor 2 (341 aa).

At Ala2 the chain carries N-acetylalanine. Residues 243 to 265 (HRFNLAPLGKRKSRSHWTSAKAC) carry the TBM motif. A Nuclear localization signal motif is present at residues 249-255 (PLGKRKS). Residues 283-341 (PAQDLSNPKSREEPGAASAASVGTEPVCTEEAKTPSRPLGKRALEETPPDSPAASRRTV) form a disordered region.

As to quaternary structure, monomer. Found in a complex with POT1; TERF1 and TNKS1. Component of the shelterin complex (telosome) composed of TERF1, TERF2, TINF2, TERF2IP, ACD and POT1. Interacts with TERF1.

It localises to the nucleus. It is found in the chromosome. The protein resides in the telomere. In terms of biological role, component of the shelterin complex (telosome) that is involved in the regulation of telomere length and protection. Shelterin associates with arrays of double-stranded TTAGGG repeats added by telomerase and protects chromosome ends; without its protective activity, telomeres are no longer hidden from the DNA damage surveillance and chromosome ends are inappropriately processed by DNA repair pathways. Plays a role in shelterin complex assembly. The sequence is that of TERF1-interacting nuclear factor 2 (Tinf2) from Mus musculus (Mouse).